The primary structure comprises 142 residues: Large ribosomal subunit protein uL11 (142 aa).

The protein belongs to the universal ribosomal protein uL11 family. As to quaternary structure, part of the ribosomal stalk of the 50S ribosomal subunit. Interacts with L10 and the large rRNA to form the base of the stalk. L10 forms an elongated spine to which L12 dimers bind in a sequential fashion forming a multimeric L10(L12)X complex. In terms of processing, one or more lysine residues are methylated.

Its function is as follows. Forms part of the ribosomal stalk which helps the ribosome interact with GTP-bound translation factors. This chain is Large ribosomal subunit protein uL11, found in Shigella boydii serotype 18 (strain CDC 3083-94 / BS512).